The following is a 500-amino-acid chain: Cytochrome P450 11B3, mitochondrial (500 aa).

A mitochondrion-targeting transit peptide spans 1 to 24 (MALRVTADVWLARPWQCLHRTRAL). Cys-447 is a heme binding site.

It belongs to the cytochrome P450 family. The cofactor is heme. As to expression, expressed in the adrenal cortex and in different brain tissues, including hippocampus, hypothalamus, cerebellum, cerebral cortex, and midbrain.

It is found in the mitochondrion membrane. The enzyme catalyses a steroid + 2 reduced [adrenodoxin] + O2 + 2 H(+) = an 11beta-hydroxysteroid + 2 oxidized [adrenodoxin] + H2O. The catalysed reaction is 21-hydroxyprogesterone + 2 reduced [adrenodoxin] + O2 + 2 H(+) = corticosterone + 2 oxidized [adrenodoxin] + H2O. It catalyses the reaction 21-hydroxyprogesterone + 2 reduced [adrenodoxin] + O2 + 2 H(+) = 18-hydroxy-11-deoxycorticosterone + 2 oxidized [adrenodoxin] + H2O. It carries out the reaction 21-hydroxyprogesterone + 2 reduced [adrenodoxin] + O2 + 2 H(+) = 19-hydroxy-11-deoxycorticosterone + 2 oxidized [adrenodoxin] + H2O. Functionally, a cytochrome P450 monooxygenase involved in the biosynthesis of adrenal corticoids. Catalyzes the hydroxylation of steroids at 11beta, 18- or 19-positions, with preferred regioselectivity at 11beta and 18. Converts 11-deoxycorticosterone into corticosterone, 18-hydroxy-11-deoxycorticosterone, and/or 19-hydroxy-11-deoxycorticosterone, but not to 18-hydroxycorticosterone or aldosterone. Mechanistically, uses molecular oxygen inserting one oxygen atom into a substrate for hydroxylation and reducing the second into a water molecule. Two electrons are provided by NADPH via a two-protein mitochondrial transfer system comprising flavoprotein FDXR (adrenodoxin/ferredoxin reductase) and nonheme iron-sulfur protein FDX1 or FDX2 (adrenodoxin/ferredoxin). The sequence is that of Cytochrome P450 11B3, mitochondrial (Cyp11b3) from Rattus norvegicus (Rat).